We begin with the raw amino-acid sequence, 2057 residues long: MKSAWLALKSKSALHPKSEYPVSNIHYPKAANYRQTRNYLEIAAKMSEEVDRNDPELKYLSVERNQFNPIRPRRPSGHRSVLVWVPHENQGFVAASIKREHGDEVEVELAETGKRVMILRDDIQKMNPPKFDKVEDMAELTCLNEASVLHNIKDRYYSGLIYTYSGLFCVVVNPYKKLPIYTEKIMERYKGIKRHEVPPHVFAITDSAYRNMLGDREDQSILCTGESGAGKTENTKKVIQFLAYVAASKPKGSGAVPHPAVLINFSVNTNKYIKVKIMAQNQNQTIEVVNGLKMVEVNSNCQEGELEQQLLQANPILEAFGNAKTVKNDNSSRFGKFIRINFDASGFISGANIETYLLEKSRAIRQAKDERTFHIFYQLLAGATPEQREKFILDDVKSYAFLSNGSLPVPGVDDYAEFQATVKSMNIMGMTSEDFNSIFRIVSAVLLFGSMKFRQERNNDQATLPDNTVAQKIAHLLGLSVTDMTRAFLTPRIKVGRDFVTKAQTKEQVEFAVEAIAKACYERMFKWLVNRINRSLDRTKRQGASFIGILDMAGFEIFELNSFEQLCINYTNEKLQQLFNHTMFILEQEEYQREGIEWKFIDFGLDLQPTIDLIDKPGGIMALLDEECWFPKATDKTFVDKLVSAHSMHPKFMKTDFRGVADFAIVHYAGRVDYSAAKWLMKNMDPLNENIVSLLQGSQDPFVVNIWKDAEIVGMAQQALTDTQFGARTRKGMFRTVSHLYKEQLAKLMDTLRNTNPNFVRCIIPNHEKRAGKIDAPLVLDQLRCNGVLEGIRICRQGFPNRIPFQEFRQRYELLTPNVIPKGFMDGKKACEKMIQALELDSNLYRVGQSKIFFRAGVLAHLEEERDFKISDLIVNFQAFCRGFLARRNYQKRLQQLNAIRIIQRNCAAYLKLRNWQWWRLYTKVKPLLEVTKQEEKLVQKEDELKQVREKLDTLAKNTQEYERKYQQALVEKTTLAEQLQAEIELCAEAEESRSRLMARKQELEDMMQELETRIEEEEERVLALGGEKKKLELNIQDLEEQLEEEEAARQKLQLEKVQLDAKIKKYEEDLALTDDQNQKLLKEKKLLEERANDLSQTLAEEEEKAKHLAKLKAKHEATITELEERLHKDQQQRQESDRSKRKIETEVADLKEQLNERRVQVDEMQAQLAKREEELTQTLLRIDEESATKATAQKAQRELESQLAEIQEDLEAEKAARAKAEKVRRDLSEELEALKNELLDSLDTTAAQQELRSKREQELATLKKSLEEETVNHEGVLADMRHKHSQELNSINDQLENLRKAKTVLEKAKGTLEAENADLATELRSVNSSRQENDRRRKQAESQIAELQVKLAEIERARSELQEKCTKLQQEAENITNQLEEAELKASAAVKSASNMESQLTEAQQLLEEETRQKLGLSSKLRQIESEKEALQEQLEEDDEAKRNYERKLAEVTTQMQEIKKKAEEDADLAKELEEGKKRLNKDIEALERQVKELIAQNDRLDKSKKKIQSELEDATIELEAQRTKVLELEKKQKNFDKILAEEKAISEQIAQERDTAEREAREKETKVLSVSRELDEAFDKIEDLENKRKTLQNELDDLANTQGTADKNVHELEKAKRALESQLAELKAQNEELEDDLQLTEDAKLRLEVNMQALRSQFERDLLAKEEGAEEKRRGLVKQLRDLETELDEERKQRTAAVASKKKLEGDLKEIETTMEMHNKVKEDALKHAKKLQAQVKDALRDAEEAKAAKEELQALSKEADGKVKALEAEVLQLTEDLASSERARRAAETERDELAEEIANNANKGSLMIDEKRRLEARIATLEEELEEEQSNSEVLLDRSRKAQLQIEQLTTELANEKSNSQKNENGRALLERQNKELKAKLAEIETAQRTKVKATIATLEAKIANLEEQLENEGKERLLQQKANRKMDKKIKELTMNIEDERRHVDQHKEQMDKLNSRIKLLKRNLDETEEELQKEKTQKRKYQRECEDMIESQEAMNREINSLKTKLRRTGGIGLSSSRLTGTPSSKRAGGGGGSDDSSVQDESLDGEDSAN.

Residues 78–128 enclose the Myosin N-terminal SH3-like domain; the sequence is HRSVLVWVPHENQGFVAASIKREHGDEVEVELAETGKRVMILRDDIQKMNP. Residues 132–867 form the Myosin motor domain; it reads DKVEDMAELT…VLAHLEEERD (736 aa). 225–232 is an ATP binding site; sequence GESGAGKT. Positions 250-260 are 25 kDa/50 kDa junction; the sequence is PKGSGAVPHPA. Positions 722–734 are 50 kDa/20 kDa junction; it reads DTQFGARTRKGMF. An actin-binding region spans residues 745–767; that stretch reads LAKLMDTLRNTNPNFVRCIIPNH. The reactive sulfhydryl/actin-binding stretch occupies residues 782–798; sequence QLRCNGVLEGIRICRQG. The IQ domain occupies 870 to 899; sequence ISDLIVNFQAFCRGFLARRNYQKRLQQLNA. Residues 926–2016 adopt a coiled-coil conformation; sequence KPLLEVTKQE…SLKTKLRRTG (1091 aa). Disordered stretches follow at residues 1124–1144, 1782–1802, and 2008–2057; these read EERL…KRKI, SSER…EEIA, and LKTK…DSAN. Residues 1343-2010 form an alpha-helical tailpiece (LMM) region; the sequence is SQIAELQVKL…MNREINSLKT (668 aa). The tract at residues 1343–2057 is light meromyosin (LMM); it reads SQIAELQVKL…ESLDGEDSAN (715 aa). A compositionally biased stretch (basic and acidic residues) spans 1782-1792; the sequence is SSERARRAAET. A globular tailpiece region spans residues 2011 to 2057; that stretch reads KLRRTGGIGLSSSRLTGTPSSKRAGGGGGSDDSSVQDESLDGEDSAN. A phosphoserine mark is found at serine 2021 and serine 2022. A compositionally biased stretch (acidic residues) spans 2044–2057; sequence SVQDESLDGEDSAN.

It belongs to the TRAFAC class myosin-kinesin ATPase superfamily. Myosin family. As to quaternary structure, interacts with sau. Interacts with ck and Ubr3. Post-translationally, ubiquitinated. As to expression, in Johnston's organ, expressed in neurons and scolopale cells.

The protein localises to the cell projection. It localises to the cilium. Its subcellular location is the cytoplasm. In terms of biological role, nonmuscle myosin appears to be responsible for cellularization. Required for morphogenesis and cytokinesis. Necessary for auditory transduction: plays a role in Johnston's organ organization by acting in scolopidial apical attachment. Interaction with the myosin ck may be important for this function. Localizes to and defines the trailing edge of cells during larval epidermal wound healing. This process is dependent on the phosphatidylinositol 4-phosphate 5-kinase sktl/skittles. This is Myosin heavy chain, non-muscle (zip) from Drosophila melanogaster (Fruit fly).